Here is a 151-residue protein sequence, read N- to C-terminus: RNA polymerase-binding transcription factor DksA (151 aa).

The stretch at 33–54 forms a coiled coil; that stretch reads NEAQLAHFRRILEAWRNQLRDE. The Zn(2+) site is built by Cys-114, Cys-117, Cys-135, and Cys-138. The dksA C4-type zinc-finger motif lies at 114–138; that stretch reads CESCGVEIGIRRLEARPTADLCIDC.

The protein belongs to the DksA family. As to quaternary structure, interacts directly with the RNA polymerase.

The protein localises to the cytoplasm. Functionally, transcription factor that acts by binding directly to the RNA polymerase (RNAP). Required for negative regulation of rRNA expression and positive regulation of several amino acid biosynthesis promoters. Also required for regulation of fis expression. In Escherichia coli O157:H7, this protein is RNA polymerase-binding transcription factor DksA.